The primary structure comprises 253 residues: 3-deoxy-manno-octulosonate cytidylyltransferase (253 aa).

Belongs to the KdsB family.

It localises to the cytoplasm. The catalysed reaction is 3-deoxy-alpha-D-manno-oct-2-ulosonate + CTP = CMP-3-deoxy-beta-D-manno-octulosonate + diphosphate. It functions in the pathway nucleotide-sugar biosynthesis; CMP-3-deoxy-D-manno-octulosonate biosynthesis; CMP-3-deoxy-D-manno-octulosonate from 3-deoxy-D-manno-octulosonate and CTP: step 1/1. The protein operates within bacterial outer membrane biogenesis; lipopolysaccharide biosynthesis. In terms of biological role, activates KDO (a required 8-carbon sugar) for incorporation into bacterial lipopolysaccharide in Gram-negative bacteria. This Idiomarina loihiensis (strain ATCC BAA-735 / DSM 15497 / L2-TR) protein is 3-deoxy-manno-octulosonate cytidylyltransferase.